Here is a 558-residue protein sequence, read N- to C-terminus: Undecaprenyl phosphate-alpha-4-amino-4-deoxy-L-arabinose arabinosyl transferase 1 (558 aa).

12 consecutive transmembrane segments (helical) span residues 4 to 24 (GAGL…LVPL), 87 to 107 (FASV…SWTV), 115 to 135 (LLAA…TYSV), 136 to 156 (LDPM…FALR), 178 to 198 (FMTK…PVAL), 207 to 227 (LGYG…WALA), 257 to 277 (APFW…LGLL), 295 to 315 (FLLL…KGKL), 316 to 336 (LTYI…YGRE), 355 to 375 (AFAL…LPWA), 383 to 403 (WPRI…AAVS), and 411 to 431 (WALA…IIPQ).

The protein belongs to the glycosyltransferase 83 family.

The protein localises to the cell inner membrane. It catalyses the reaction 4-amino-4-deoxy-alpha-L-arabinopyranosyl di-trans,octa-cis-undecaprenyl phosphate + lipid IVA = lipid IIA + di-trans,octa-cis-undecaprenyl phosphate.. The protein operates within lipopolysaccharide metabolism; 4-amino-4-deoxy-beta-L-arabinose-lipid A biosynthesis. Its function is as follows. Catalyzes the transfer of the L-Ara4N moiety of the glycolipid undecaprenyl phosphate-alpha-L-Ara4N to lipid A. The modified arabinose is attached to lipid A and is required for resistance to polymyxin and cationic antimicrobial peptides. The sequence is that of Undecaprenyl phosphate-alpha-4-amino-4-deoxy-L-arabinose arabinosyl transferase 1 from Sodalis glossinidius (strain morsitans).